The sequence spans 165 residues: Ubiquitin-fold modifier-conjugating enzyme 1 (165 aa).

The Glycyl thioester intermediate role is filled by C116.

The protein belongs to the ubiquitin-conjugating enzyme family. UFC1 subfamily.

Functionally, E2-like enzyme which forms an intermediate with UFM1 via a thioester linkage. The chain is Ubiquitin-fold modifier-conjugating enzyme 1 from Drosophila virilis (Fruit fly).